The following is a 923-amino-acid chain: Mitochondrial 10-formyltetrahydrofolate dehydrogenase (923 aa).

The transit peptide at 1–19 (MLWRGSQALRHFSTSRVYF) directs the protein to the mitochondrion; not cleaved. A hydrolase domain region spans residues 23–331 (LKLALIGQSL…PASQYFSAGE (309 aa)). At S31 the chain carries Phosphoserine. Position 60 is an N6-succinyllysine (K60). 110–112 (QFI) is a (6R)-10-formyltetrahydrofolate binding site. The active-site Proton donor is H128. A (6R)-10-formyltetrahydrofolate-binding site is contributed by D164. Residues 339–416 (AEELKVAETI…DFIQKVVRRL (78 aa)) form the Carrier domain. S375 is subject to O-(pantetheine 4'-phosphoryl)serine. An aldehyde dehydrogenase domain region spans residues 438-923 (TVKIPYQCFI…LKIKTVTLEY (486 aa)). NADP(+) contacts are provided by residues 592–594 (IPW) and 618–621 (KPAQ). At S650 the chain carries Phosphoserine. Residues 651–656 (GGVAGQ) and 671–672 (GS) each bind NADP(+). The residue at position 681 (K681) is an N6-succinyllysine. Residue E694 is the Proton acceptor of the active site. 694–695 (EL) is a binding site for NADP(+). The active-site Proton donor is the C728. NADP(+) contacts are provided by residues K778 and 825-827 (ESF). K903 carries the N6-acetyllysine modification.

In the N-terminal section; belongs to the GART family. This sequence in the C-terminal section; belongs to the aldehyde dehydrogenase family. ALDH1L subfamily. Phosphopantetheinylation at Ser-375 by AASDHPPT is required for the formyltetrahydrofolate dehydrogenase activity.

Its subcellular location is the mitochondrion. The enzyme catalyses (6R)-10-formyltetrahydrofolate + NADP(+) + H2O = (6S)-5,6,7,8-tetrahydrofolate + CO2 + NADPH + H(+). Its function is as follows. Mitochondrial 10-formyltetrahydrofolate dehydrogenase that catalyzes the NADP(+)-dependent conversion of 10-formyltetrahydrofolate to tetrahydrofolate and carbon dioxide. This Mus musculus (Mouse) protein is Mitochondrial 10-formyltetrahydrofolate dehydrogenase.